The following is a 113-amino-acid chain: U11-theraphotoxin-Hhn1a (113 aa).

The signal sequence occupies residues 1–21 (MNTVRVTFLLVFVLAVSLGQA). Positions 22–74 (DKDENRMEMQEKTEQGNSYLDFAENLPLQKLEELEAKLLEEDSEESRNSRQKR) are excised as a propeptide. The span at 60–69 (LEEDSEESRN) shows a compositional bias: basic and acidic residues. Residues 60-83 (LEEDSEESRNSRQKRCIGEGVPCD) are disordered. Intrachain disulfides connect Cys-75–Cys-90, Cys-82–Cys-95, and Cys-89–Cys-110.

This sequence belongs to the neurotoxin 14 (magi-1) family. 01 (HNTX-16) subfamily. Expressed by the venom gland.

The protein resides in the secreted. In terms of biological role, probable ion channel inhibitor. The chain is U11-theraphotoxin-Hhn1a from Cyriopagopus hainanus (Chinese bird spider).